We begin with the raw amino-acid sequence, 572 residues long: Urease subunit alpha (572 aa).

The Urease domain maps to 134 to 572; that stretch reads AGIDTHIHLI…AAMNQLYFFG (439 aa). The Ni(2+) site is built by His139, His141, and Lys222. Residue Lys222 is modified to N6-carboxylysine. Residue His224 coordinates substrate. Ni(2+)-binding residues include His251 and His277. Catalysis depends on His325, which acts as the Proton donor. Residue Asp365 coordinates Ni(2+).

The protein belongs to the metallo-dependent hydrolases superfamily. Urease alpha subunit family. As to quaternary structure, heterotrimer of UreA (gamma), UreB (beta) and UreC (alpha) subunits. Three heterotrimers associate to form the active enzyme. Requires Ni cation as cofactor. Post-translationally, carboxylation allows a single lysine to coordinate two nickel ions.

The protein localises to the cytoplasm. It catalyses the reaction urea + 2 H2O + H(+) = hydrogencarbonate + 2 NH4(+). The protein operates within nitrogen metabolism; urea degradation; CO(2) and NH(3) from urea (urease route): step 1/1. The polypeptide is Urease subunit alpha (Edwardsiella ictaluri (strain 93-146)).